A 329-amino-acid chain; its full sequence is Phosphate import ATP-binding protein PstB (329 aa).

The ABC transporter domain occupies Phe-83–Ile-325. Gly-116–Ser-123 lines the ATP pocket.

Belongs to the ABC transporter superfamily. Phosphate importer (TC 3.A.1.7) family. As to quaternary structure, the complex is composed of two ATP-binding proteins (PstB), two transmembrane proteins (PstC and PstA) and a solute-binding protein (PstS).

The protein resides in the cell membrane. It carries out the reaction phosphate(out) + ATP + H2O = ADP + 2 phosphate(in) + H(+). Its function is as follows. Part of the ABC transporter complex PstSACB involved in phosphate import. Responsible for energy coupling to the transport system. The polypeptide is Phosphate import ATP-binding protein PstB (Mycoplasma pneumoniae (strain ATCC 29342 / M129 / Subtype 1) (Mycoplasmoides pneumoniae)).